Reading from the N-terminus, the 100-residue chain is uncharacterized protein (100 aa).

Helical transmembrane passes span 7–28 (TLIG…LLSL), 38–60 (AQLS…ILII), and 65–87 (LSAL…ANGV).

It localises to the cell membrane. This is an uncharacterized protein from Archaeoglobus fulgidus (strain ATCC 49558 / DSM 4304 / JCM 9628 / NBRC 100126 / VC-16).